Consider the following 433-residue polypeptide: MKINIRDSTMVRPATETPITNLWNSNVDLVIPRFHTPSVYFYRPTGASNFFDPQVMKEALSKALVPFYPMAGRLKRDDDGRIEIDCNGAGVLFVVADTPSVIDDFGDFAPTLNLRQLIPEVDHSAGIHSFPLLVLQVTFFKCGGASLGVGMQHHAADGFSGLHFINTWSDMARGLDLTIPPFIDRTLLRARDPPQPAFHHVEYQPAPSMKIPLDPSKSGPENTTVSIFKLTRDQLVALKAKSKEDGNTVSYSSYEMLAGHVWRSVGKARGLPNDQETKLYIATDGRSRLRPQLPPGYFGNVIFTATPLAVAGDLLSKPTWYAAGQIHDFLVRMDDNYLRSALDYLEMQPDLSALVRGAHTYKCPNLGITSWVRLPIYDADFGWGRPIFMGPGGIPYEGLSFVLPSPTNDGSLSVAIALQSEHMKLFEKFLFEI.

Residue His-153 is the Proton acceptor of the active site. 4-coumaroyl-CoA-binding positions include 252 to 255 (SSYE), 284 to 290 (DGRSRLR), and 370 to 373 (SWVR). Asp-380 functions as the Proton acceptor in the catalytic mechanism.

Belongs to the plant acyltransferase family.

The enzyme catalyses shikimate + 4-coumaroyl-CoA = trans-4-coumaroylshikimate + CoA. Its function is as follows. Acyltransferase involved in the biosynthesis of lignin. Accepts caffeoyl-CoA and p-coumaroyl-CoA as substrates and transfers the acyl group on both shikimate and quinate acceptors. This Arabidopsis thaliana (Mouse-ear cress) protein is Shikimate O-hydroxycinnamoyltransferase (HST).